We begin with the raw amino-acid sequence, 60 residues long: Large ribosomal subunit protein bL32 (60 aa).

Residues 1–36 (MAVQQNKKSPSKRGMHRSHNALNTPGLAIEPTTGET) are disordered. Over residues 9–19 (SPSKRGMHRSH) the composition is skewed to basic residues.

It belongs to the bacterial ribosomal protein bL32 family.

This is Large ribosomal subunit protein bL32 from Methylibium petroleiphilum (strain ATCC BAA-1232 / LMG 22953 / PM1).